Reading from the N-terminus, the 502-residue chain is ATP synthase subunit alpha, chloroplastic (502 aa).

An ATP-binding site is contributed by 170–177 (GDRQTGKT).

This sequence belongs to the ATPase alpha/beta chains family. As to quaternary structure, F-type ATPases have 2 components, CF(1) - the catalytic core - and CF(0) - the membrane proton channel. CF(1) has five subunits: alpha(3), beta(3), gamma(1), delta(1), epsilon(1). CF(0) has four main subunits: a, b, b' and c.

It localises to the plastid. The protein resides in the chloroplast thylakoid membrane. The enzyme catalyses ATP + H2O + 4 H(+)(in) = ADP + phosphate + 5 H(+)(out). Its function is as follows. Produces ATP from ADP in the presence of a proton gradient across the membrane. The alpha chain is a regulatory subunit. The protein is ATP synthase subunit alpha, chloroplastic of Rhodomonas salina (Cryptomonas salina).